We begin with the raw amino-acid sequence, 550 residues long: Arginine--tRNA ligase (550 aa).

The short motif at 130–140 is the 'HIGH' region element; that stretch reads ANPTGPIHLGG.

Belongs to the class-I aminoacyl-tRNA synthetase family. Monomer.

It localises to the cytoplasm. It carries out the reaction tRNA(Arg) + L-arginine + ATP = L-arginyl-tRNA(Arg) + AMP + diphosphate. This Corynebacterium efficiens (strain DSM 44549 / YS-314 / AJ 12310 / JCM 11189 / NBRC 100395) protein is Arginine--tRNA ligase.